Reading from the N-terminus, the 177-residue chain is Small ribosomal subunit protein mS23 (177 aa).

N-acetylalanine is present on Ala-2. Lys-83 is subject to N6-succinyllysine. Lys-102 carries the N6-acetyllysine modification. The interval 145 to 177 (LQASSEGHEPQEDDDLAQRGQVKQEPETAPSPP) is disordered.

The protein belongs to the mitochondrion-specific ribosomal protein mS23 family. In terms of assembly, component of the mitochondrial ribosome small subunit (28S) which comprises a 12S rRNA and about 30 distinct proteins.

The protein localises to the mitochondrion. This is Small ribosomal subunit protein mS23 from Mus musculus (Mouse).